The following is a 284-amino-acid chain: uncharacterized protein (284 aa).

This sequence belongs to the methyltransferase superfamily.

It localises to the cytoplasm. Its subcellular location is the nucleus. Probable methyltransferase. This is an uncharacterized protein from Schizosaccharomyces pombe (strain 972 / ATCC 24843) (Fission yeast).